Here is a 343-residue protein sequence, read N- to C-terminus: Ribosomal RNA small subunit methyltransferase, chloroplastic (343 aa).

The N-terminal 48 residues, 1 to 48 (MMNAVITSATINCNSLSPSWTCGDNSPSKLLLGEISAALSRRRTVKVS), are a transit peptide targeting the chloroplast. The S-adenosyl-L-methionine site is built by His-78, Met-80, Gly-105, Glu-126, Asp-151, and Asn-183.

This sequence belongs to the class I-like SAM-binding methyltransferase superfamily. rRNA adenine N(6)-methyltransferase family.

The protein localises to the plastid. It is found in the chloroplast. Its function is as follows. Required for methylation of the 3' adenosines in the small subunit of plastid rRNA. Essential for chloroplast biogenesis at low temperatures. This is Ribosomal RNA small subunit methyltransferase, chloroplastic from Arabidopsis thaliana (Mouse-ear cress).